A 315-amino-acid chain; its full sequence is DNA-directed RNA polymerase subunit alpha (315 aa).

An alpha N-terminal domain (alpha-NTD) region spans residues 1-229 (MLDSKLKAPV…EHLTYFSNPQ (229 aa)). Positions 247–315 (EQEEELDLPL…LEKKGFTLKE (69 aa)) are alpha C-terminal domain (alpha-CTD).

The protein belongs to the RNA polymerase alpha chain family. As to quaternary structure, homodimer. The RNAP catalytic core consists of 2 alpha, 1 beta, 1 beta' and 1 omega subunit. When a sigma factor is associated with the core the holoenzyme is formed, which can initiate transcription.

It catalyses the reaction RNA(n) + a ribonucleoside 5'-triphosphate = RNA(n+1) + diphosphate. Functionally, DNA-dependent RNA polymerase catalyzes the transcription of DNA into RNA using the four ribonucleoside triphosphates as substrates. This chain is DNA-directed RNA polymerase subunit alpha, found in Thermus thermophilus (strain ATCC BAA-163 / DSM 7039 / HB27).